We begin with the raw amino-acid sequence, 167 residues long: Small ribosomal subunit protein uS9 (167 aa).

Disordered regions lie at residues 1 to 45 (MSEY…GGAT) and 137 to 167 (KAGF…FSKR). The span at 9-19 (DTVEDITESDE) shows a compositional bias: acidic residues. Residues 20–36 (FTGTYTSESSTPATGGN) are compositionally biased toward polar residues. Positions 143-152 (RDPRATERKK) are enriched in basic and acidic residues. Basic residues predominate over residues 153 to 167 (AGLKKARKAPQFSKR).

Belongs to the universal ribosomal protein uS9 family.

This Kineococcus radiotolerans (strain ATCC BAA-149 / DSM 14245 / SRS30216) protein is Small ribosomal subunit protein uS9.